A 32-amino-acid polypeptide reads, in one-letter code: ilv operon leader peptide (32 aa).

Functionally, this protein is involved in control of the biosynthesis of isoleucine, leucine, and valine. The polypeptide is ilv operon leader peptide (ivbL) (Escherichia coli (strain K12)).